The following is a 433-amino-acid chain: Enolase (433 aa).

Gln-167 lines the (2R)-2-phosphoglycerate pocket. Glu-209 functions as the Proton donor in the catalytic mechanism. Mg(2+)-binding residues include Asp-246, Glu-291, and Asp-318. Residues Lys-343, Arg-372, Ser-373, and Lys-394 each coordinate (2R)-2-phosphoglycerate. Lys-343 (proton acceptor) is an active-site residue.

Belongs to the enolase family. Component of the RNA degradosome, a multiprotein complex involved in RNA processing and mRNA degradation. It depends on Mg(2+) as a cofactor.

It localises to the cytoplasm. The protein resides in the secreted. It is found in the cell surface. The catalysed reaction is (2R)-2-phosphoglycerate = phosphoenolpyruvate + H2O. Its pathway is carbohydrate degradation; glycolysis; pyruvate from D-glyceraldehyde 3-phosphate: step 4/5. Its function is as follows. Catalyzes the reversible conversion of 2-phosphoglycerate (2-PG) into phosphoenolpyruvate (PEP). It is essential for the degradation of carbohydrates via glycolysis. The sequence is that of Enolase from Aeromonas salmonicida (strain A449).